The following is a 241-amino-acid chain: Xyloglucan-specific endo-beta-1,4-glucanase 1 (241 aa).

Residues methionine 1–alanine 19 form the signal peptide. Glutamate 136 is an active-site residue. N-linked (GlcNAc...) asparagine glycans are attached at residues asparagine 174 and asparagine 190. Glutamate 222 is an active-site residue.

It belongs to the glycosyl hydrolase 12 (cellulase H) family. As to quaternary structure, interacts with host apoplastic glucanase inhibitor GIP1.

It is found in the secreted. Its subcellular location is the host. It catalyses the reaction xyloglucan + H2O = xyloglucan oligosaccharides.. Its activity is regulated as follows. The xyloglucanase activity is inhibited by the binding of the host apoplastic glucanase inhibitor GIP1. Its function is as follows. Glycoside hydrolase that exhibits xyloglucanase activity. Acts as an important virulence factor during P.sojae infection but also acts as a pathogen-associated molecular pattern (PAMP) in soybean and solanaceous species, where it can trigger defense responses including cell death. XEG1-induced cell death can be suppressed by P.sojae RxLR effectors. The PAMP activity is independent of its xyloglucanase activity. XEG1 induces plant defense responses in a RLP kinase Serk3/Bak1-dependent manner in Nicotiana benthamiana. Moreover, the perception of XEG1 occurs independently of the perception of ethylene-inducing xylanase Eix2 in Tomato. With truncated paralog XLP1, is required to elevate apoplastic sugar during P.sojae infection. The sequence is that of Xyloglucan-specific endo-beta-1,4-glucanase 1 from Phytophthora sojae (strain P6497) (Soybean stem and root rot agent).